We begin with the raw amino-acid sequence, 1163 residues long: MICQKFCVVLLHWEFICVITAFNLSYPITPWRFKLSCMPPNSTYDYFLLPAGLSKNTSNLNGHYETAVEFNSSDTHFSNLSKTTFHCCFRSEQDRNCSLCADNIEGKTFVSTVNSSVFQQMGANWNIQCWLKGDLKLFICYVESLFKNPFKNYKHKVHLLYVLPEVLEDSPLVPQKGSFQMVHCNCSVHERCECLVPVPTAKLNDTLLMCLKITSGGVIFQSPLMSVQPINMVKPDPPLGLRMEITDDGNLKISWSSPPLVPFPLQYEVKYSENSTTVIREADKIVSATSLLVDGILPGSSYEVQVRGKRLDGPGIWSDWSTPHVFTTQDVIYFPPKILTSVGSNVSFHCIYKNENKIVSSKKIVWWMNLAEKIPQSQYDVVSDHVSKVTFFNLNETKPRGKFTYDAVYCCNEHECHHRYAELYVIDVNINISCETDGHLTKMTCRWSTNTIQSLAGSTLQLRYRRSSLYCFDIPSIHPISKPKDCYLQSDGFYECVFQPIFLLSGYTMWIRINHPLGSLDSPPTCVLPDSVVKPLPPSSVKAEIIKNIGLLKISWEKPVFPENNLQFQIRYGLSGKEIQWKMYDVYDAKSKSVSLPVPDFCAVYAVQVRCKRSDGLGLWSNWSNPAYTVVMDIKVPMRGPEFWRIINGDTMKKEKNVTLLWKPLMKNESLCSVQRYVINHHTSCNGTWSEDVGNHTKFTFLWTEQAHTVTVLAINSIGASVANFNLTFSWPMSKVNIVQSLSAYPLNSSCVILSWILSPSDYKLMYFIIEWKNLNEDGEIKWLRISSSVKKYYIHDHFIPIEKYQFSLYPIFMEGVGKPKIINSFAQDNTEKHQNDAGLYVIVPVIISSSILLLGTLLILHQRMKKLFWEDVPNPKNCSWAQGLNFQKPETFEHLFIKHTASVTCGPLLLEPETISEDISVDTSWKNKDEMVPTTVVSLLSTTDLEKGSVCISDQFNSVNFSEAEGTEVTCEDESQRQPFVKYATLISNSKPSETDEEQGLINSSVTKCFSSKNSPLKDSFSNSSWEIEAQAFFILSDQRPNIILPHLTFSEGLDELLRLEGNFPEENNDEKSIYYLGVTSIKKRESGVLLTDKSRVLCPFPAPCLFTDIRVLQDSCSHFVENNFNLGTSSKKTFASYMPQFQTCSTQTHKIMENKMCDLTV.

The N-terminal stretch at 1-21 (MICQKFCVVLLHWEFICVITA) is a signal peptide. The Extracellular segment spans residues 22-837 (FNLSYPITPW…QDNTEKHQND (816 aa)). Asn-23, Asn-41, Asn-56, Asn-71, Asn-79, Asn-96, and Asn-114 each carry an N-linked (GlcNAc...) asparagine glycan. Intrachain disulfides connect Cys-37/Cys-88 and Cys-87/Cys-97. 2 cysteine pairs are disulfide-bonded: Cys-129–Cys-140 and Cys-184–Cys-194. 5 N-linked (GlcNAc...) asparagine glycosylation sites follow: Asn-185, Asn-204, Asn-274, Asn-345, and Asn-395. Residues 237 to 331 (PPLGLRMEIT…TPHVFTTQDV (95 aa)) form the Fibronectin type-III 1 domain. Disulfide bonds link Cys-350-Cys-410 and Cys-411-Cys-416. Asn-431 carries N-linked (GlcNAc...) asparagine glycosylation. Disulfide bonds link Cys-434–Cys-445, Cys-471–Cys-526, and Cys-486–Cys-496. Residues 465 to 482 (RRSSLYCFDIPSIHPISK) are leptin-binding. Fibronectin type-III domains lie at 537–632 (PPSS…TVVM), 637–730 (PMRG…LTFS), and 738–831 (IVQS…QDNT). A WSXWS motif motif is present at residues 620 to 624 (WSNWS). Asn-622, Asn-657, Asn-668, Asn-686, Asn-695, Asn-726, and Asn-748 each carry an N-linked (GlcNAc...) asparagine glycan. The helical transmembrane segment at 838 to 860 (AGLYVIVPVIISSSILLLGTLLI) threads the bilayer. At 861–1163 (LHQRMKKLFW…MENKMCDLTV (303 aa)) the chain is on the cytoplasmic side. A Box 1 motif motif is present at residues 869 to 877 (FWEDVPNPK). Phosphoserine is present on Ser-880. Residues 891–896 (ETFEHL) are required for JAK2 activation. The tract at residues 896–904 (LFIKHTASV) is required for STAT3 phosphorylation. Residue Tyr-984 is modified to Phosphotyrosine; by JAK2. Position 1077 is a phosphotyrosine (Tyr-1077). Tyr-1139 is modified (phosphotyrosine; by JAK2).

Belongs to the type I cytokine receptor family. Type 2 subfamily. In terms of assembly, present as a mixture of monomers and dimers. The phosphorylated receptor binds a number of SH2 domain-containing proteins such as JAK2, STAT3, PTPN11, and SOCS3. Interaction with SOCS3 inhibits JAK/STAT signaling and MAPK cascade. In terms of processing, on ligand binding, phosphorylated on two conserved C-terminal tyrosine residues (isoform B only) by JAK2. Tyr-984 is required for complete binding and activation of PTPN11, ERK/FOS activation and, for interaction with SOCS3. Phosphorylation on Tyr-1139 is required for STAT3 binding/activation. On ligand binding, phosphorylated on two conserved C-terminal tyrosine residues (isoform B only) by JAK2. Tyr-984 is required for complete binding and activation of PTPN11, ERK/FOS activation,for interaction with SOCS3 and SOCS3 mediated inhibition of leptin signaling. Phosphorylation on Tyr-1139 is required for STAT3 binding/activation. Phosphorylation of Tyr-1077 has a more accessory role. As to expression, widely expressed. High expression of isoform B in liver, adipose tissue, hypothalamus and choroid plexus.

Its subcellular location is the cell membrane. The protein resides in the basolateral cell membrane. In terms of biological role, receptor for hormone LEP/leptin. On ligand binding, mediates LEP central and peripheral effects through the activation of different signaling pathways such as JAK2/STAT3 and MAPK cascade/FOS. In the hypothalamus, LEP acts as an appetite-regulating factor that induces a decrease in food intake and an increase in energy consumption by inducing anorexinogenic factors and suppressing orexigenic neuropeptides, also regulates bone mass and secretion of hypothalamo-pituitary-adrenal hormones. In the periphery, increases basal metabolism, influences reproductive function, regulates pancreatic beta-cell function and insulin secretion, is pro-angiogenic and affects innate and adaptive immunity. Control of energy homeostasis and melanocortin production (stimulation of POMC and full repression of AgRP transcription) is mediated by STAT3 signaling, whereas distinct signals regulate NPY and the control of fertility, growth and glucose homeostasis. Involved in the regulation of counter-regulatory response to hypoglycemia by inhibiting neurons of the parabrachial nucleus. Has a specific effect on T lymphocyte responses, differentially regulating the proliferation of naive and memory T-cells. Leptin increases Th1 and suppresses Th2 cytokine production. Its function is as follows. May transport LEP across the blood-brain barrier. Binds LEP and mediates LEP endocytosis. Does not induce phosphorylation of and activate STAT3. The chain is Leptin receptor (LEPR) from Macaca mulatta (Rhesus macaque).